A 283-amino-acid polypeptide reads, in one-letter code: Nucleoid occlusion protein (283 aa).

The segment at residues 142 to 161 (ESLAQRLGKGQSTIANKLRL) is a DNA-binding region (H-T-H motif).

Belongs to the ParB family.

The protein resides in the cytoplasm. The protein localises to the nucleoid. Its function is as follows. Effects nucleoid occlusion by binding relatively nonspecifically to DNA and preventing the assembly of the division machinery in the vicinity of the nucleoid, especially under conditions that disturb the cell cycle. It helps to coordinate cell division and chromosome segregation by preventing the formation of the Z ring through the nucleoid, which would cause chromosome breakage. The sequence is that of Nucleoid occlusion protein from Shouchella clausii (strain KSM-K16) (Alkalihalobacillus clausii).